We begin with the raw amino-acid sequence, 62 residues long: uncharacterized protein (62 aa).

This is an uncharacterized protein from Schizosaccharomyces pombe (strain 972 / ATCC 24843) (Fission yeast).